The primary structure comprises 517 residues: UDP-N-acetylmuramoyl-tripeptide--D-alanyl-D-alanine ligase (517 aa).

138–144 (GSSGKTS) serves as a coordination point for ATP.

This sequence belongs to the MurCDEF family. MurF subfamily.

It is found in the cytoplasm. It carries out the reaction D-alanyl-D-alanine + UDP-N-acetyl-alpha-D-muramoyl-L-alanyl-gamma-D-glutamyl-meso-2,6-diaminopimelate + ATP = UDP-N-acetyl-alpha-D-muramoyl-L-alanyl-gamma-D-glutamyl-meso-2,6-diaminopimeloyl-D-alanyl-D-alanine + ADP + phosphate + H(+). The protein operates within cell wall biogenesis; peptidoglycan biosynthesis. In terms of biological role, involved in cell wall formation. Catalyzes the final step in the synthesis of UDP-N-acetylmuramoyl-pentapeptide, the precursor of murein. The sequence is that of UDP-N-acetylmuramoyl-tripeptide--D-alanyl-D-alanine ligase from Mycobacterium leprae (strain TN).